An 86-amino-acid chain; its full sequence is MSDQRRKSAGRRKYTPRRKVCVFTAEGIVPDYKDIKRLQRMVSDRGKILPRRRTGTCAKYQRKLNVAIKRARHLALLPFVSENTRG.

It belongs to the bacterial ribosomal protein bS18 family. As to quaternary structure, part of the 30S ribosomal subunit. Forms a tight heterodimer with protein bS6.

Its function is as follows. Binds as a heterodimer with protein bS6 to the central domain of the 16S rRNA, where it helps stabilize the platform of the 30S subunit. The sequence is that of Small ribosomal subunit protein bS18 from Herpetosiphon aurantiacus (strain ATCC 23779 / DSM 785 / 114-95).